We begin with the raw amino-acid sequence, 697 residues long: MRQILVTSALPYANGPIHLGHLVEYIQTDIWVRAMKAQSHQVTYVCADDAHGTAIMLKAEANGVTPEQQIATVKASHEADFSKFLIGFDNYHSTHSEENRELSELIYRRLNGEGHISTKDVEQLFDPEKGLFLADRFVKGECPECGAQDQYGDNCEVCGTTYNATELKNPYSTLSGATPVLRTSKHYFFNLPEFESFLKQWTKDEGRLQPSVSNKLQEWFEAGLASWDISRDAPYFGFKIPDTPEGEPDKYFYVWLDAPVGYMASFKNLCKQRQGSTDPQQPELSFDDYWLQENQHKTELYHFIGKDIVYFHALFWPAMLAGSEYRTPTGVFAHGFLMVNGDKMSKSRGTFIQAETFAKHLNPEYLRYYFASKLSEKVEDINLDFADFMQKVNSDMVGKVVNIASRSAGFIAKKYDGMLSDSCAEPELLNEIVRAGEEIATAYENREFSRAMRLIMQCADKANEYIDSKKPWAMAKEEGREQEVQDVCTVAINIFRQLMVYLAPVLPELTDNAKAFLNIDDLSFASRHELLLGHKINKFKPLMQRIEQAQIDAMVADSKQDLLATPTAQADNVAKAAQASETNDQQDSDYIEFDDFMKVEMTVAQVLECNHVEGADKLLQFTLDIGKEQPINVFSGIRKFYEPEQLANKKVICVTNLAPRKMKFGVSEGMILSSGDPKTGLVVITLPDECKVGDKLA.

Positions 11–21 match the 'HIGH' region motif; sequence PYANGPIHLGH. Residues C142, C145, C155, and C158 each contribute to the Zn(2+) site. The 'KMSKS' region signature appears at 343–347; it reads KMSKS. Position 346 (K346) interacts with ATP. One can recognise a tRNA-binding domain in the interval 595-697; it reads DFMKVEMTVA…DECKVGDKLA (103 aa).

The protein belongs to the class-I aminoacyl-tRNA synthetase family. MetG type 1 subfamily. As to quaternary structure, homodimer. It depends on Zn(2+) as a cofactor.

The protein localises to the cytoplasm. The catalysed reaction is tRNA(Met) + L-methionine + ATP = L-methionyl-tRNA(Met) + AMP + diphosphate. Is required not only for elongation of protein synthesis but also for the initiation of all mRNA translation through initiator tRNA(fMet) aminoacylation. The chain is Methionine--tRNA ligase from Psychrobacter sp. (strain PRwf-1).